The sequence spans 40 residues: Dihydrolipoyl dehydrogenase (40 aa).

Residue 36–40 coordinates FAD; the sequence is EKRGT.

It belongs to the class-I pyridine nucleotide-disulfide oxidoreductase family. Homodimer. Requires FAD as cofactor.

The protein localises to the mitochondrion matrix. It catalyses the reaction N(6)-[(R)-dihydrolipoyl]-L-lysyl-[protein] + NAD(+) = N(6)-[(R)-lipoyl]-L-lysyl-[protein] + NADH + H(+). In terms of biological role, lipoamide dehydrogenase is a component of the glycine cleavage system as well as of the alpha-ketoacid dehydrogenase complexes. The pyruvate dehydrogenase complex contains multiple copies of three enzymatic components: pyruvate dehydrogenase (E1), dihydrolipoamide acetyltransferase (E2) and lipoamide dehydrogenase (E3). This chain is Dihydrolipoyl dehydrogenase, found in Solanum tuberosum (Potato).